Here is a 204-residue protein sequence, read N- to C-terminus: Outer-membrane lipoprotein LolB (204 aa).

An N-terminal signal peptide occupies residues 1 to 16 (MLRHLLVFSLIALLAG). Cys-17 carries N-palmitoyl cysteine lipidation. Cys-17 carries S-diacylglycerol cysteine lipidation.

It belongs to the LolB family. Monomer.

The protein localises to the cell outer membrane. Its function is as follows. Plays a critical role in the incorporation of lipoproteins in the outer membrane after they are released by the LolA protein. The sequence is that of Outer-membrane lipoprotein LolB from Ectopseudomonas mendocina (strain ymp) (Pseudomonas mendocina).